A 381-amino-acid chain; its full sequence is Acetylornithine deacetylase (381 aa).

His79 is a binding site for Zn(2+). Residue Asp81 is part of the active site. Zn(2+) is bound at residue Asp111. Glu143 is an active-site residue. 3 residues coordinate Zn(2+): Glu144, Glu168, and His354.

The protein belongs to the peptidase M20A family. ArgE subfamily. Homodimer. Zn(2+) is required as a cofactor. Co(2+) serves as cofactor. The cofactor is glutathione.

The protein resides in the cytoplasm. The catalysed reaction is N(2)-acetyl-L-ornithine + H2O = L-ornithine + acetate. The protein operates within amino-acid biosynthesis; L-arginine biosynthesis; L-ornithine from N(2)-acetyl-L-ornithine (linear): step 1/1. Functionally, catalyzes the hydrolysis of the amide bond of N(2)-acetylated L-amino acids. Cleaves the acetyl group from N-acetyl-L-ornithine to form L-ornithine, an intermediate in L-arginine biosynthesis pathway, and a branchpoint in the synthesis of polyamines. The chain is Acetylornithine deacetylase from Buchnera aphidicola subsp. Acyrthosiphon pisum (strain Tuc7).